The primary structure comprises 83 residues: Normal mucosa of esophagus-specific gene 1 protein (83 aa).

The protein belongs to the complex I NDUFA4 subunit family. In terms of tissue distribution, expressed mainly in stomach, placenta, small intestine and colon, as well as in normal mucosa of esophagus. Down-regulated in esophageal squamous cell carcinoma.

The protein resides in the nucleus. The chain is Normal mucosa of esophagus-specific gene 1 protein (NMES1) from Homo sapiens (Human).